The primary structure comprises 358 residues: 3-isopropylmalate dehydrogenase (358 aa).

An NAD(+)-binding site is contributed by 75–88 (GPKWETLPPEKQPE). Arg96, Arg106, Arg135, and Asp225 together coordinate substrate. Mg(2+) contacts are provided by Asp225, Asp249, and Asp253. NAD(+) is bound at residue 283 to 295 (GSAPDIAGKGVAN).

This sequence belongs to the isocitrate and isopropylmalate dehydrogenases family. LeuB type 1 subfamily. Homodimer. Mg(2+) serves as cofactor. It depends on Mn(2+) as a cofactor.

The protein localises to the cytoplasm. The enzyme catalyses (2R,3S)-3-isopropylmalate + NAD(+) = 4-methyl-2-oxopentanoate + CO2 + NADH. Its pathway is amino-acid biosynthesis; L-leucine biosynthesis; L-leucine from 3-methyl-2-oxobutanoate: step 3/4. Its function is as follows. Catalyzes the oxidation of 3-carboxy-2-hydroxy-4-methylpentanoate (3-isopropylmalate) to 3-carboxy-4-methyl-2-oxopentanoate. The product decarboxylates to 4-methyl-2 oxopentanoate. The sequence is that of 3-isopropylmalate dehydrogenase from Leptospira interrogans serogroup Icterohaemorrhagiae serovar copenhageni (strain Fiocruz L1-130).